A 92-amino-acid chain; its full sequence is Probable Fe(2+)-trafficking protein (92 aa).

The protein belongs to the Fe(2+)-trafficking protein family.

In terms of biological role, could be a mediator in iron transactions between iron acquisition and iron-requiring processes, such as synthesis and/or repair of Fe-S clusters in biosynthetic enzymes. In Shewanella pealeana (strain ATCC 700345 / ANG-SQ1), this protein is Probable Fe(2+)-trafficking protein.